The chain runs to 179 residues: Dual-action ribosomal maturation protein DarP (179 aa).

This sequence belongs to the DarP family.

Its subcellular location is the cytoplasm. Member of a network of 50S ribosomal subunit biogenesis factors which assembles along the 30S-50S interface, preventing incorrect 23S rRNA structures from forming. Promotes peptidyl transferase center (PTC) maturation. This Photorhabdus laumondii subsp. laumondii (strain DSM 15139 / CIP 105565 / TT01) (Photorhabdus luminescens subsp. laumondii) protein is Dual-action ribosomal maturation protein DarP.